Reading from the N-terminus, the 337-residue chain is Sorting nexin-15 (337 aa).

Positions 1-130 (MSRQAKDDFL…EFFRGGEVTR (130 aa)) constitute a PX domain. Arg51, Ser53, Arg87, and Arg96 together coordinate a 1,2-diacyl-sn-glycero-3-phospho-(1D-myo-inositol-3-phosphate). Residue Arg105 is modified to Omega-N-methylarginine. Residues 133 to 156 (EVSRDLRILPPPLIPTPPPDEARL) form a disordered region. Over residues 141–151 (LPPPLIPTPPP) the composition is skewed to pro residues. 2 positions are modified to phosphoserine: Ser201 and Ser227. Residues 244–270 (LDQEPWEPGGQEEEEAEDGEPAPAYLG) form a disordered region. A compositionally biased stretch (acidic residues) spans 253 to 263 (GQEEEEAEDGE). The 73-residue stretch at 265–337 (APAYLGQATE…RAEMLHTHLP (73 aa)) folds into the MIT domain.

It belongs to the sorting nexin family. In terms of assembly, homodimer. Interacts with SNX1, SNX2 and SNX4.

The protein resides in the cytoplasm. The protein localises to the membrane. It localises to the cytoplasmic vesicle membrane. In terms of biological role, may be involved in several stages of intracellular trafficking. Overexpression of SNX15 disrupts the normal trafficking of proteins from the plasma membrane to recycling endosomes or the TGN. This chain is Sorting nexin-15 (Snx15), found in Mus musculus (Mouse).